Consider the following 313-residue polypeptide: tRNA pseudouridine synthase B (313 aa).

Asp46 serves as the catalytic Nucleophile.

This sequence belongs to the pseudouridine synthase TruB family. Type 1 subfamily.

It catalyses the reaction uridine(55) in tRNA = pseudouridine(55) in tRNA. Responsible for synthesis of pseudouridine from uracil-55 in the psi GC loop of transfer RNAs. This chain is tRNA pseudouridine synthase B, found in Nitrosospira multiformis (strain ATCC 25196 / NCIMB 11849 / C 71).